The sequence spans 277 residues: Collectin-10 (277 aa).

Positions 1 to 27 (MSRKKEQQLRKYGTLVVLFIFQVQIFG) are cleaved as a signal peptide. The interval 41 to 82 (THTILPGPKGDDGEKGDRGEVGKQGKVGPKGPKGNKGTVGDV) is disordered. Over residues 49–63 (KGDDGEKGDRGEVGK) the composition is skewed to basic and acidic residues. One can recognise a Collagen-like domain in the interval 56–115 (GDRGEVGKQGKVGPKGPKGNKGTVGDVGDQGMLGKIGPIGGKGDKGAKGISGVSGKKGKA). Residues 64 to 79 (QGKVGPKGPKGNKGTV) are compositionally biased toward low complexity. Residues 155 to 271 (TDEKFYYIVK…CQVTIYFICE (117 aa)) enclose the C-type lectin domain. Intrachain disulfides connect C176–C270 and C248–C262. An N-linked (GlcNAc...) asparagine glycan is attached at N258.

Belongs to the COLEC10/COLEC11 family. In terms of tissue distribution, widely expressed. Highly expressed in lung. Weakly expressed in larynx, syrinx and cranial air sac. Expressed throughout the lower gastrointestinal tract in increasing levels starting from a faint signal in duodenum and ending with relatively high signals in proctodeum, coprodeum and urodeum. In the upper part of the gastrointestinal tract, expressed in tongue, crop, and mucosa of the crop.

It is found in the secreted. The protein localises to the golgi apparatus. It localises to the cytoplasm. Lectin that binds to various sugars: galactose &gt; mannose = fucose &gt; N-acetylglucosamine &gt; N-acetylgalactosamine. Acts as a chemoattractant, probably involved in the regulation of cell migration. The chain is Collectin-10 (COLEC10) from Gallus gallus (Chicken).